Consider the following 89-residue polypeptide: Small ribosomal subunit protein uS14 (89 aa).

Belongs to the universal ribosomal protein uS14 family. As to quaternary structure, part of the 30S ribosomal subunit. Contacts proteins S3 and S10.

Binds 16S rRNA, required for the assembly of 30S particles and may also be responsible for determining the conformation of the 16S rRNA at the A site. The sequence is that of Small ribosomal subunit protein uS14 from Amoebophilus asiaticus (strain 5a2).